The chain runs to 430 residues: ETS domain-containing protein Elk-4 (430 aa).

A DNA-binding region (ETS) is located at residues 5–85 (ITLWQFLLQL…NGQKFVYKFV (81 aa)). Residues 116-127 (SKDVEYGGKERP) show a composition bias toward basic and acidic residues. Residues 116–138 (SKDVEYGGKERPPQPGAKTSSRN) are disordered. Residue K166 forms a Glycyl lysine isopeptide (Lys-Gly) (interchain with G-Cter in SUMO2) linkage. Disordered regions lie at residues 245–279 (TTFN…DIDT) and 292–325 (PENL…KGLE). The span at 249–272 (PTPPVPSTPLPLKEPPRTPSPPLS) shows a compositional bias: pro residues. The span at 299-312 (PKNEDSALPEKDKT) shows a compositional bias: basic and acidic residues.

Belongs to the ETS family. As to quaternary structure, interacts with SIRT7. Lung and liver.

Its subcellular location is the nucleus. Involved in both transcriptional activation and repression. Interaction with SIRT7 leads to recruitment and stabilization of SIRT7 at promoters, followed by deacetylation of histone H3 at 'Lys-18' (H3K18Ac) and subsequent transcription repression. Forms a ternary complex with the serum response factor (SRF). Requires DNA-bound SRF for ternary complex formation and makes extensive DNA contacts to the 5'side of SRF, but does not bind DNA autonomously. In Mus musculus (Mouse), this protein is ETS domain-containing protein Elk-4 (Elk4).